We begin with the raw amino-acid sequence, 995 residues long: MGMRPTARMPKLTRRSRVLILIALGVIALLLAGPRLIDAYVDWLWFGELGYLSVFTTVLVTRFLVFLVAGVLVGGIVFAGLALAYRTRPVFVPNNDNDPVARYRTVVLARLRLFGIGIPAAIGLLAGIVAQSYWVRIQLFLHGGDFGITDPQFGKDLGFYAFELPFYRLLLSYLFVAIFLAFVANVVSHYLFGGIRLTGRSGALSRSARIQLVSLVGVLVLLKTVAYWLNRYELLSHTRGGKPFTGAGYTDINAVLPAKLILMAIAVICAAAVFSAIVLRDLRIPAIGLVLLLLSSLIVGAAWPMIVEQISVKPNAAQKESEYISRSITATRQAYGLTSNVVTYRNYTGDGEATAQQVAADRATTSNIRLLDPTIVSPAFTQFQQGKNFYYFPDQLSIDRYFDRNNNLRDYVVAARELNPDRLIDNQRDWINRHTVYTHGNGFIASPANTVRGIANDPNQNGGYPEFLVNVVGANGTVVSDGPAPLDQPRIYYGPVISNTPADYAIVGKTGADREYDYETSADTKNYTYTGSGGVSVGSWISRTVFAAKFAERNFLFSNVIGSNSKILFNRDPAQRVEAVAPWLTTDSAVYPAIVNKRMVWILDGYTTLDNYPYSQLTSLSSATADSNEVAFNRLLPDKQVSYIRNSVKATVDAYDGTVTLYQQDEQDPVLKAWMQVFPGTVKPKGDISPELAAHLRYPEDLFKVQRMLLAKYHVNDPVTFFSTSDFWDVPLDPNPTASSYQPPYYIVAKNIAKNDNSASYQLISAMNRFKRDYLAAYISASSDPATYGKITVLTIPGQVNGPKLANNAITTDPAVSQDLGVIGRDNQNRIRWGNLLTLPVGQGGLLYVEPVYASPGASDAASSYPRLIRVAMMYNDKIGYGPTVRDALNGLFGPGAGDAATGIQPTEGGAPANVPPNNAPSPEALPGTPPSPPTAVPPAPEASVTLSPARAAAMKEIQSAIGAARDAQKKGDFAAYGAALQRLDDAITKFNNTQ.

7 helical membrane-spanning segments follow: residues 18 to 38, 63 to 83, 113 to 133, 175 to 195, 210 to 230, 259 to 279, and 287 to 307; these read VLIL…RLID, FLVF…GLAL, LFGI…AQSY, FVAI…FGGI, IQLV…YWLN, KLIL…AIVL, and IGLV…PMIV. The segment at 900 to 947 is disordered; sequence AATGIQPTEGGAPANVPPNNAPSPEALPGTPPSPPTAVPPAPEASVTL. Residues 928–941 are compositionally biased toward pro residues; the sequence is GTPPSPPTAVPPAP.

The protein belongs to the UPF0182 family.

It is found in the cell membrane. This chain is UPF0182 protein MUL_2505, found in Mycobacterium ulcerans (strain Agy99).